The chain runs to 411 residues: Na(+)-translocating NADH-quinone reductase subunit F (411 aa).

The chain crosses the membrane as a helical span at residues 6–26 (AIGGVAMFTLIIMSFVAIILA). A 2Fe-2S ferredoxin-type domain is found at 35 to 129 (GDVTIHINDN…DMKIEIDPEF (95 aa)). The [2Fe-2S] cluster site is built by Cys-72, Cys-78, Cys-81, and Cys-113. One can recognise an FAD-binding FR-type domain in the interval 132–273 (VQKWECEVIS…SGPYGEFFAK (142 aa)).

It belongs to the NqrF family. As to quaternary structure, composed of six subunits; NqrA, NqrB, NqrC, NqrD, NqrE and NqrF. Requires [2Fe-2S] cluster as cofactor. FAD serves as cofactor.

The protein resides in the cell inner membrane. The catalysed reaction is a ubiquinone + n Na(+)(in) + NADH + H(+) = a ubiquinol + n Na(+)(out) + NAD(+). Functionally, NQR complex catalyzes the reduction of ubiquinone-1 to ubiquinol by two successive reactions, coupled with the transport of Na(+) ions from the cytoplasm to the periplasm. The first step is catalyzed by NqrF, which accepts electrons from NADH and reduces ubiquinone-1 to ubisemiquinone by a one-electron transfer pathway. The protein is Na(+)-translocating NADH-quinone reductase subunit F of Psychrobacter arcticus (strain DSM 17307 / VKM B-2377 / 273-4).